The primary structure comprises 600 residues: CTP synthase (600 aa).

A Glutamine amidotransferase type-1 domain is found at 304–570 (TIVLVGKYTH…IQSGEEVEWS (267 aa)). Active-site for GATase activity residues include Cys403, His532, and Glu534.

This sequence belongs to the CTP synthase family.

It carries out the reaction UTP + L-glutamine + ATP + H2O = CTP + L-glutamate + ADP + phosphate + 2 H(+). Its pathway is pyrimidine metabolism; CTP biosynthesis via de novo pathway; CTP from UDP: step 2/2. Catalyzes the ATP-dependent amination of UTP to CTP with either L-glutamine or ammonia as the source of nitrogen. The polypeptide is CTP synthase (ura7) (Schizosaccharomyces pombe (strain 972 / ATCC 24843) (Fission yeast)).